We begin with the raw amino-acid sequence, 338 residues long: Phosphate transport system permease protein PstC 1 (338 aa).

Helical transmembrane passes span 19 to 39 (GGIG…VLVI), 93 to 113 (TSAI…LVIV), 123 to 143 (AVGI…GLWG), 144 to 164 (AMTF…HNAP), 181 to 201 (GMLV…ATTT), 232 to 252 (LPWV…RALG), 254 to 274 (TMAV…NIYA), and 295 to 315 (TNFA…ITLL). An ABC transmembrane type-1 domain is found at 87-320 (IVGTLATSAI…VITLLTNVAA (234 aa)).

The protein belongs to the binding-protein-dependent transport system permease family. CysTW subfamily.

The protein localises to the cell membrane. Functionally, part of the binding-protein-dependent transport system for phosphate; probably responsible for the translocation of the substrate across the membrane. This chain is Phosphate transport system permease protein PstC 1 (pstC1), found in Mycobacterium bovis (strain ATCC BAA-935 / AF2122/97).